A 1594-amino-acid polypeptide reads, in one-letter code: Mucin-like protein (1594 aa).

At 1–1530 the chain is on the extracellular side; that stretch reads DTTAGPDTTS…YETREDGLEM (1530 aa). TSP type-1 domains are found at residues 141–196, 198–253, and 255–310; these read DGGF…GSCP, DGNF…PPCP, and DGNF…GPCP. Intrachain disulfides connect Cys153–Cys190, Cys157–Cys195, Cys168–Cys180, Cys210–Cys247, Cys214–Cys252, Cys225–Cys237, Cys267–Cys304, Cys271–Cys309, and Cys282–Cys294. Residues 400 to 566 form the NIDO domain; the sequence is LTISDDAFEQ…GVWFFRLEMN (167 aa). Residues 568–706 enclose the AMOP domain; it reads ILSLAGKKCN…RSCFGYTLRR (139 aa). The 196-residue stretch at 706 to 901 folds into the VWFD domain; that stretch reads RRGLIFGDPH…KWQINASQSL (196 aa). EGF-like domains lie at 1063 to 1108 and 1110 to 1156; these read LILL…QYCQ and KIDA…SICE. 14 disulfides stabilise this stretch: Cys1067–Cys1075, Cys1069–Cys1096, Cys1098–Cys1107, Cys1114–Cys1127, Cys1121–Cys1141, Cys1144–Cys1155, Cys1161–Cys1173, Cys1169–Cys1182, Cys1285–Cys1296, Cys1292–Cys1305, Cys1307–Cys1320, Cys1326–Cys1341, Cys1334–Cys1350, and Cys1352–Cys1363. Residues 1157–1191 form the EGF-like 3; calcium-binding domain; that stretch reads DIDECSDANVSKCDHSCINLPGSYVCDCNQGFSLE. The 41-residue stretch at 1281 to 1321 folds into the EGF-like 4; calcium-binding domain; it reads DINECTTHRHKCSQICHNLDGSYTCSCQPGFNLSPDQTTCE. The region spanning 1322 to 1364 is the EGF-like 5; calcium-binding domain; sequence DIDECGLINEAHCEGSLEICINTMGSFRCECQDGFHRVNDTCQ. The helical transmembrane segment at 1531–1551 threads the bilayer; that stretch reads IWLLVGVSVAVAVPLMIVIVI. The Cytoplasmic segment spans residues 1552 to 1593; the sequence is LYREYRRIAKQRRKTNNFDLRQWSGARERTIYSGFTNSKSAR.

Component of the acid-insoluble and acid-soluble organic matrix of the aragonitic skeleton (at protein level).

The protein resides in the membrane. This Acropora millepora (Staghorn coral) protein is Mucin-like protein.